A 149-amino-acid polypeptide reads, in one-letter code: Large ribosomal subunit protein uL11 (149 aa).

The protein belongs to the universal ribosomal protein uL11 family. In terms of assembly, part of the ribosomal stalk of the 50S ribosomal subunit. Interacts with L10 and the large rRNA to form the base of the stalk. L10 forms an elongated spine to which L12 dimers bind in a sequential fashion forming a multimeric L10(L12)X complex. One or more lysine residues are methylated.

Its function is as follows. Forms part of the ribosomal stalk which helps the ribosome interact with GTP-bound translation factors. This is Large ribosomal subunit protein uL11 from Xanthobacter autotrophicus (strain ATCC BAA-1158 / Py2).